Reading from the N-terminus, the 1940-residue chain is Cilia- and flagella-associated protein 74 (1940 aa).

A disordered region spans residues G52–P90. Low complexity predominate over residues A63–P90. The stretch at A100–P159 forms a coiled coil. 5 disordered regions span residues V512–T548, S1159–E1336, P1373–P1418, A1714–K1737, and P1894–V1940. The span at S535–T548 shows a compositional bias: low complexity. Residues D1205–G1220 are compositionally biased toward gly residues. Positions D1227–D1236 are enriched in acidic residues. The span at G1260–A1271 shows a compositional bias: gly residues. A compositionally biased stretch (acidic residues) spans G1272 to G1282. Residues R1287–S1304 show a composition bias toward low complexity. Acidic residues predominate over residues V1321 to A1335. Residues P1373–A1414 show a composition bias toward low complexity. 2 stretches are compositionally biased toward pro residues: residues T1720–P1731 and S1896–E1912. Positions P1913–L1929 are enriched in low complexity. A compositionally biased stretch (pro residues) spans V1930–V1940.

The protein belongs to the CFAP74 family. In terms of assembly, part of the PDCP1 complex composed of CFAP46, CFAP54, CFAP74 and CFAP221; the PDCP1 complex binds calmodulin.

The protein localises to the cytoplasm. The protein resides in the cytoskeleton. It is found in the cilium axoneme. Functionally, as part of the central apparatus of the cilium axoneme may play a role in cilium movement and thereby cell motility. This Chlamydomonas reinhardtii (Chlamydomonas smithii) protein is Cilia- and flagella-associated protein 74.